Reading from the N-terminus, the 187-residue chain is Aminodeoxychorismate synthase component 2 (187 aa).

Residues 1–187 enclose the Glutamine amidotransferase type-1 domain; it reads MILLIDNYDS…HQLLANFLNR (187 aa). Catalysis depends on residues C79, H168, and E170.

Monomer. Heterodimer consisting of two non-identical subunits: a glutamine amidotransferase subunit (PabA) and a aminodeoxychorismate synthase subunit (PabB).

The catalysed reaction is chorismate + L-glutamine = 4-amino-4-deoxychorismate + L-glutamate. It functions in the pathway cofactor biosynthesis; tetrahydrofolate biosynthesis; 4-aminobenzoate from chorismate: step 1/2. Part of a heterodimeric complex that catalyzes the two-step biosynthesis of 4-amino-4-deoxychorismate (ADC), a precursor of p-aminobenzoate (PABA) and tetrahydrofolate. In the first step, a glutamine amidotransferase (PabA) generates ammonia as a substrate that, along with chorismate, is used in the second step, catalyzed by aminodeoxychorismate synthase (PabB) to produce ADC. PabA converts glutamine into glutamate only in the presence of stoichiometric amounts of PabB. The chain is Aminodeoxychorismate synthase component 2 (pabA) from Klebsiella aerogenes (Enterobacter aerogenes).